Here is a 335-residue protein sequence, read N- to C-terminus: Histidinol-phosphate aminotransferase (335 aa).

Position 202 is an N6-(pyridoxal phosphate)lysine (Lys-202).

Belongs to the class-II pyridoxal-phosphate-dependent aminotransferase family. Histidinol-phosphate aminotransferase subfamily. As to quaternary structure, homodimer. Requires pyridoxal 5'-phosphate as cofactor.

The catalysed reaction is L-histidinol phosphate + 2-oxoglutarate = 3-(imidazol-4-yl)-2-oxopropyl phosphate + L-glutamate. It functions in the pathway amino-acid biosynthesis; L-histidine biosynthesis; L-histidine from 5-phospho-alpha-D-ribose 1-diphosphate: step 7/9. This is Histidinol-phosphate aminotransferase from Thermotoga neapolitana (strain ATCC 49049 / DSM 4359 / NBRC 107923 / NS-E).